We begin with the raw amino-acid sequence, 479 residues long: Transcript termination protein A18 (479 aa).

The Helicase ATP-binding domain maps to Lys99–Leu255. Leu112–Thr119 provides a ligand contact to ATP. Residues Asp205 to His208 carry the DESH box motif. In terms of domain architecture, Helicase C-terminal spans Ile308–Ala469.

It belongs to the helicase family. Poxviruses subfamily. Interacts with G2. Might be part of a transcription complex composed at least of G2, A18, and H5.

The protein resides in the virion. DNA helicase which seems to act as a postreplicative transcription termination factor. Involved in ATP-dependent release of nascent RNA. Forms a stable complex with single-stranded DNA, and to a lesser extent RNA. The protein is Transcript termination protein A18 of Homo sapiens (Human).